The primary structure comprises 351 residues: Glycerol-3-phosphate dehydrogenase [NAD(P)+] (351 aa).

Serine 18, tryptophan 19, arginine 38, and lysine 122 together coordinate NADPH. Lysine 122, glycine 153, and serine 155 together coordinate sn-glycerol 3-phosphate. NADPH is bound at residue alanine 157. Lysine 208, aspartate 261, serine 271, arginine 272, and asparagine 273 together coordinate sn-glycerol 3-phosphate. The active-site Proton acceptor is the lysine 208. Arginine 272 contributes to the NADPH binding site. Glutamate 297 serves as a coordination point for NADPH.

This sequence belongs to the NAD-dependent glycerol-3-phosphate dehydrogenase family.

The protein localises to the cytoplasm. The catalysed reaction is sn-glycerol 3-phosphate + NAD(+) = dihydroxyacetone phosphate + NADH + H(+). The enzyme catalyses sn-glycerol 3-phosphate + NADP(+) = dihydroxyacetone phosphate + NADPH + H(+). The protein operates within membrane lipid metabolism; glycerophospholipid metabolism. Its function is as follows. Catalyzes the reduction of the glycolytic intermediate dihydroxyacetone phosphate (DHAP) to sn-glycerol 3-phosphate (G3P), the key precursor for phospholipid synthesis. This chain is Glycerol-3-phosphate dehydrogenase [NAD(P)+], found in Bordetella pertussis (strain Tohama I / ATCC BAA-589 / NCTC 13251).